We begin with the raw amino-acid sequence, 293 residues long: Protein transport protein yif1 (293 aa).

The Cytoplasmic segment spans residues 1–139; the sequence is MPPKLYHPQP…PPAEDLNSPD (139 aa). A helical transmembrane segment spans residues 140–160; the sequence is MYIPLMAFTTHILLLCALAGL. The Lumenal portion of the chain corresponds to 161–175; the sequence is QDDFQPELFGLRASK. Residues 176–196 form a helical membrane-spanning segment; it reads ACAVVLVEFLATRLGCYLLNI. Over 197–201 the chain is Cytoplasmic; sequence SSQSQ. The chain crosses the membrane as a helical span at residues 202-222; that stretch reads VLDLLAFSGYKFVGLILTSLS. Residues 223–226 are Lumenal-facing; that stretch reads KLFE. Residues 227 to 247 traverse the membrane as a helical segment; it reads MPWVTRFVFLYMYLATAFFLL. At 248–271 the chain is on the cytoplasmic side; it reads RSLKYAVLPESTMAINATITSHQR. A helical membrane pass occupies residues 272–292; sequence SRRIYFLFFIAASQILFMYVL. Residue S293 is a topological domain, lumenal.

It belongs to the YIF1 family. Component of the yip1-yif1 complex, composed of at least yif1, yip1 and yos1. The complex interacts with the ER to Golgi SNAREs bos1 and sec22.

The protein resides in the endoplasmic reticulum membrane. It is found in the golgi apparatus membrane. It localises to the cytoplasmic vesicle. Its subcellular location is the COPII-coated vesicle. Its function is as follows. Required for fusion of ER-derived vesicles with the Golgi during ER-to-Golgi protein transport. May be involved in proper membrane localization of Rab GTPases. The chain is Protein transport protein yif1 from Schizosaccharomyces pombe (strain 972 / ATCC 24843) (Fission yeast).